Consider the following 778-residue polypeptide: uncharacterized protein (778 aa).

Polar residues-rich tracts occupy residues 1–11, 18–34, and 41–51; these read MPISSPGTRCS, TLQQ…QSLG, and GSITENYVQDS. The tract at residues 1-60 is disordered; that stretch reads MPISSPGTRCSSDLKDPTLQQYSAESVSTEQSLGTFEESKGSITENYVQDSSVDEHDDGN. 2 consecutive transmembrane segments (helical) span residues 356–381 and 401–423; these read YILM…APII and GFLA…GAHI.

It belongs to the TMCO4 family.

It localises to the golgi apparatus membrane. This is an uncharacterized protein from Schizosaccharomyces pombe (strain 972 / ATCC 24843) (Fission yeast).